A 331-amino-acid polypeptide reads, in one-letter code: Type 2 lactosamine alpha-2,3-sialyltransferase (331 aa).

Over 1 to 4 (MRGY) the chain is Cytoplasmic. Residues 5-25 (LVAIFLSAVFLYYVLHCILWG) form a helical; Signal-anchor for type II membrane protein membrane-spanning segment. The Lumenal segment spans residues 26 to 331 (TNVYWVAPVE…KNLVINLTQD (306 aa)). Asparagine 129, asparagine 181, asparagine 282, asparagine 295, asparagine 308, and asparagine 327 each carry an N-linked (GlcNAc...) asparagine glycan.

The protein belongs to the glycosyltransferase 29 family. Ubiquitous.

It is found in the golgi apparatus membrane. It catalyses the reaction a neolactoside nLc4Cer(d18:1(4E)) + CMP-N-acetyl-beta-neuraminate = a neolactoside IV(3)-alpha-NeuAc-nLc4Cer(d18:1(4E)) + CMP + H(+). It carries out the reaction a beta-D-galactosyl-(1-&gt;4)-N-acetyl-beta-D-glucosaminyl derivative + CMP-N-acetyl-beta-neuraminate = an N-acetyl-alpha-neuraminyl-(2-&gt;3)-beta-D-galactosyl-(1-&gt;4)-N-acetyl-beta-D-glucosaminyl derivative + CMP + H(+). The catalysed reaction is a neolactoside nLc6Cer(d18:1(4E)) + CMP-N-acetyl-beta-neuraminate = a neolactoside VI(3)-alpha-NeuNAc-nLc6Cer(d18:1(4E)) + CMP + H(+). Transfers the sialyl residue from CMP-N-acetyl-beta-neuraminate to the terminal galactose residue on sugar chains of glycoproteins and glycolipids. It's alpha-2,3-sialyltransferase activity is specific toward type II glycan chains (Galbeta1-4GlcNAc) on glycoproteins and glycolipids such as neolactosides nLc4Cer and nLc6Cer, whose sialyl-products serve as precursors for the Lewis X antigen. Critically involved in the synthesis of functional selectin ligands needed for neutrophil recruitment during inflammation and lymphocyte homing to the lymph nodes. The sequence is that of Type 2 lactosamine alpha-2,3-sialyltransferase (ST3GAL6) from Homo sapiens (Human).